Here is a 661-residue protein sequence, read N- to C-terminus: Glycogen debranching enzyme (661 aa).

The active-site Nucleophile is Asp-338. Glu-373 functions as the Proton donor in the catalytic mechanism. The interval 460 to 481 (NQLNGEGNRDGSDRNFSNNHGV) is disordered.

It belongs to the glycosyl hydrolase 13 family.

It catalyses the reaction Hydrolysis of (1-&gt;6)-alpha-D-glucosidic linkages to branches with degrees of polymerization of three or four glucose residues in limit dextrin.. The protein operates within glycan degradation; glycogen degradation. Functionally, removes maltotriose and maltotetraose chains that are attached by 1,6-alpha-linkage to the limit dextrin main chain, generating a debranched limit dextrin. The sequence is that of Glycogen debranching enzyme from Serratia proteamaculans (strain 568).